We begin with the raw amino-acid sequence, 209 residues long: Orotate phosphoribosyltransferase (209 aa).

5-phospho-alpha-D-ribose 1-diphosphate-binding positions include Arg96, Lys100, His102, and 122-130 (EDLISTGGS). Ser126 lines the orotate pocket.

Belongs to the purine/pyrimidine phosphoribosyltransferase family. PyrE subfamily. In terms of assembly, homodimer. Mg(2+) serves as cofactor.

It carries out the reaction orotidine 5'-phosphate + diphosphate = orotate + 5-phospho-alpha-D-ribose 1-diphosphate. The protein operates within pyrimidine metabolism; UMP biosynthesis via de novo pathway; UMP from orotate: step 1/2. Functionally, catalyzes the transfer of a ribosyl phosphate group from 5-phosphoribose 1-diphosphate to orotate, leading to the formation of orotidine monophosphate (OMP). The polypeptide is Orotate phosphoribosyltransferase (Streptococcus thermophilus (strain CNRZ 1066)).